The following is a 463-amino-acid chain: MSDTSATKTEIRVIIVGGSVAGLTLAHCLAKANISHVVLEKRAEISPQEGAFLGIWPNGGRIFDQLGVYADLEQCTVPIHTMRVRFPDGFSFSSELPRCVQERFGYPIVSLDRQKVLEILHDRYPAKSNIHINKRVTEIRQTEREAQVVTDDGAVYKGDLVVGADGIHSAVRAEMWRQAKGLVGRRDGQAFAVEYACVFGISTPIPGLESGEHVNSYSDGLCVITFHGKDGRIFWFILIKLHKRFVYPKTPRFSASDAAKVCAEYASVPVWGEICVRDLWRNKTSASMTALEEGLLKTWNFKRVVLLGDSIHKMTPNIGQGANTAAEDAAVLASLLQRLSTSASSTTSGTIDAVLREYVSLRYKRVKSTYQRAYFGARLHTRDNVLKCFVGRYIFPRFSQQVLERTSQAIAGAPLVDFLPTPKRSGAGWSDYAGSPEVGAPTVPWLVISLPVLASVLCYLMFA.

FAD-binding residues include Glu40, Gly54, and Arg113. Residue Tyr217 is part of the active site. The FAD site is built by Asp309 and Ala322. A helical membrane pass occupies residues 443–463 (VPWLVISLPVLASVLCYLMFA).

The protein belongs to the paxM FAD-dependent monooxygenase family. FAD serves as cofactor.

Its subcellular location is the membrane. It functions in the pathway secondary metabolite biosynthesis; terpenoid biosynthesis. In terms of biological role, FAD-dependent monooxygenase; part of the gene cluster that mediates the biosynthesis of calidodehydroaustin, a fungal meroterpenoid. The first step of the pathway is the synthesis of 3,5-dimethylorsellinic acid by the polyketide synthase ausA. 3,5-dimethylorsellinic acid is then prenylated by the polyprenyl transferase ausN. Further epoxidation by the FAD-dependent monooxygenase ausM and cyclization by the probable terpene cyclase ausL lead to the formation of protoaustinoid A. Protoaustinoid A is then oxidized to spiro-lactone preaustinoid A3 by the combined action of the FAD-binding monooxygenases ausB and ausC, and the dioxygenase ausE. Acid-catalyzed keto-rearrangement and ring contraction of the tetraketide portion of preaustinoid A3 by ausJ lead to the formation of preaustinoid A4. The aldo-keto reductase ausK, with the help of ausH, is involved in the next step by transforming preaustinoid A4 into isoaustinone which is in turn hydroxylated by the P450 monooxygenase ausI to form austinolide. The cytochrome P450 monooxygenase ausG modifies austinolide to austinol. Austinol is further acetylated to austin by the O-acetyltransferase ausP, which spontaneously changes to dehydroaustin. The cytochrome P450 monooxygenase ausR then converts dehydroaustin is into 7-dehydrodehydroaustin. The hydroxylation catalyzed by ausR permits the O-acetyltransferase ausQ to add an additional acetyl group to the molecule, leading to the formation of acetoxydehydroaustin. The short chain dehydrogenase ausT catalyzes the reduction of the double bond present between carbon atoms 1 and 2 to convert 7-dehydrodehydroaustin into 1,2-dihydro-7-hydroxydehydroaustin. AusQ catalyzes not only an acetylation reaction but also the addition of the PKS ausV diketide product to 1,2-dihydro-7-hydroxydehydroaustin, forming precalidodehydroaustin. Finally, the iron/alpha-ketoglutarate-dependent dioxygenase converts precalidodehydroaustin into calidodehydroaustin. This Aspergillus calidoustus protein is FAD-dependent monooxygenase ausM.